The sequence spans 514 residues: ATP synthase subunit alpha (514 aa).

170 to 177 (GDRQIGKT) contacts ATP.

This sequence belongs to the ATPase alpha/beta chains family. F-type ATPases have 2 components, CF(1) - the catalytic core - and CF(0) - the membrane proton channel. CF(1) has five subunits: alpha(3), beta(3), gamma(1), delta(1), epsilon(1). CF(0) has three main subunits: a(1), b(2) and c(9-12). The alpha and beta chains form an alternating ring which encloses part of the gamma chain. CF(1) is attached to CF(0) by a central stalk formed by the gamma and epsilon chains, while a peripheral stalk is formed by the delta and b chains.

The protein localises to the cell inner membrane. It catalyses the reaction ATP + H2O + 4 H(+)(in) = ADP + phosphate + 5 H(+)(out). Functionally, produces ATP from ADP in the presence of a proton gradient across the membrane. The alpha chain is a regulatory subunit. The protein is ATP synthase subunit alpha of Pseudomonas fluorescens (strain SBW25).